The chain runs to 392 residues: Bifunctional enzyme IspD/IspF (392 aa).

2-C-methyl-D-erythritol 4-phosphate cytidylyltransferase regions lie at residues M1–T234 and M1–A235. Residues A235–T392 are 2-C-methyl-D-erythritol 2,4-cyclodiphosphate synthase. Residues D241 and H243 each coordinate a divalent metal cation. 4-CDP-2-C-methyl-D-erythritol 2-phosphate is bound by residues D241–H243 and H267–S268. H275 lines the a divalent metal cation pocket. 4-CDP-2-C-methyl-D-erythritol 2-phosphate contacts are provided by residues D289–G291, T365–E368, F372, and R375.

In the N-terminal section; belongs to the IspD/TarI cytidylyltransferase family. IspD subfamily. It in the C-terminal section; belongs to the IspF family. A divalent metal cation serves as cofactor.

The enzyme catalyses 2-C-methyl-D-erythritol 4-phosphate + CTP + H(+) = 4-CDP-2-C-methyl-D-erythritol + diphosphate. It carries out the reaction 4-CDP-2-C-methyl-D-erythritol 2-phosphate = 2-C-methyl-D-erythritol 2,4-cyclic diphosphate + CMP. Its pathway is isoprenoid biosynthesis; isopentenyl diphosphate biosynthesis via DXP pathway; isopentenyl diphosphate from 1-deoxy-D-xylulose 5-phosphate: step 2/6. It participates in isoprenoid biosynthesis; isopentenyl diphosphate biosynthesis via DXP pathway; isopentenyl diphosphate from 1-deoxy-D-xylulose 5-phosphate: step 4/6. Bifunctional enzyme that catalyzes the formation of 4-diphosphocytidyl-2-C-methyl-D-erythritol from CTP and 2-C-methyl-D-erythritol 4-phosphate (MEP) (IspD), and catalyzes the conversion of 4-diphosphocytidyl-2-C-methyl-D-erythritol 2-phosphate (CDP-ME2P) to 2-C-methyl-D-erythritol 2,4-cyclodiphosphate (ME-CPP) with a corresponding release of cytidine 5-monophosphate (CMP) (IspF). This chain is Bifunctional enzyme IspD/IspF, found in Sphingopyxis alaskensis (strain DSM 13593 / LMG 18877 / RB2256) (Sphingomonas alaskensis).